A 563-amino-acid chain; its full sequence is Arginine--tRNA ligase (563 aa).

The 'HIGH' region signature appears at P121–H131.

This sequence belongs to the class-I aminoacyl-tRNA synthetase family. Monomer.

It is found in the cytoplasm. It carries out the reaction tRNA(Arg) + L-arginine + ATP = L-arginyl-tRNA(Arg) + AMP + diphosphate. The sequence is that of Arginine--tRNA ligase from Streptococcus pneumoniae (strain Hungary19A-6).